Consider the following 313-residue polypeptide: MASNVTNKTDPRSMNSRVFIGNLNTLVVKKSDVEAIFSKYGKIVGCSVHKGFAFVQYVNERNARAAVAGEDGRMIAGQVLDINLAAEPKVNRGKAGVKRSAAEMYGSVPEHPSPSPLLSSSFDLDYDFQRDYYDRMYSYPARVPPPPPIARAVVPSKRQRVSGNTSRRGKSGFNSKSGQRGSSSKSGKLKGDDLQAIKKELTQIKQKVDSLLESLEKIEKEQSKQADLSFSSPVEMKNEKSEEEQSSASVKKDETNVKMESEAGADDSAEEGDLLDDDDNEDRGDDQLELKDDEKEPEEGEDDRDSANGEDDS.

At A2 the chain carries N-acetylalanine. Residues K8, K50, K89, and K94 each participate in a glycyl lysine isopeptide (Lys-Gly) (interchain with G-Cter in SUMO2) cross-link. In terms of domain architecture, RRM spans 16 to 87 (SRVFIGNLNT…QVLDINLAAE (72 aa)). 3 positions are modified to phosphoserine: S113, S115, and S121. Disordered stretches follow at residues 139 to 191 (YPAR…KLKG) and 219 to 313 (EKEQ…EDDS). The Nuclear localization signal signature appears at 155–161 (PSKRQRV). Residues S162 and S166 each carry the phosphoserine modification. The segment covering 175–186 (SKSGQRGSSSKS) has biased composition (low complexity). K176 carries the N6-acetyllysine; alternate modification. Residue K176 forms a Glycyl lysine isopeptide (Lys-Gly) (interchain with G-Cter in SUMO2); alternate linkage. Positions 191-226 (GDDLQAIKKELTQIKQKVDSLLESLEKIEKEQSKQA) form a coiled coil. A Glycyl lysine isopeptide (Lys-Gly) (interchain with G-Cter in SUMO2) cross-link involves residue K224. Residues S229, S231, and S232 each carry the phosphoserine modification. K237 participates in a covalent cross-link: Glycyl lysine isopeptide (Lys-Gly) (interchain with G-Cter in SUMO2). Residue K240 forms a Glycyl lysine isopeptide (Lys-Gly) (interchain with G-Cter in SUMO2); alternate linkage. K240 is covalently cross-linked (Glycyl lysine isopeptide (Lys-Gly) (interchain with G-Cter in SUMO1); alternate). A phosphoserine mark is found at S241, S246, S247, and S249. Over residues 250–261 (VKKDETNVKMES) the composition is skewed to basic and acidic residues. Residues K251 and K252 each participate in a glycyl lysine isopeptide (Lys-Gly) (interchain with G-Cter in SUMO2) cross-link. A Glycyl lysine isopeptide (Lys-Gly) (interchain with G-Cter in SUMO2); alternate cross-link involves residue K258. Residue K258 forms a Glycyl lysine isopeptide (Lys-Gly) (interchain with G-Cter in SUMO); alternate linkage. Residues S261 and S268 each carry the phosphoserine modification. The segment covering 263–284 (AGADDSAEEGDLLDDDDNEDRG) has biased composition (acidic residues). Basic and acidic residues predominate over residues 285–294 (DDQLELKDDE). Residues 295-313 (KEPEEGEDDRDSANGEDDS) are compositionally biased toward acidic residues. S306 and S313 each carry phosphoserine.

It belongs to the RRM HNRPC family. RALY subfamily. As to quaternary structure, tetramer composed of 3 copies of isoform C1 and 1 copy of isoform C2. Assembly of 3 tetramers with bound pre-mRNA gives rise to a 19S complex that interacts with HNRNPA2B1 tetramers. Component of the 40S hnRNP particle. Identified in the spliceosome C complex. Interacts with IGF2BP1. Interacts with DHX9; this interaction is direct, enhanced probably by their concomitant binding to RNA and mediates the attachment to actin filaments. Interacts with PPIA/CYPA. Post-translationally, phosphorylated on Ser-268 and Ser-306 in resting cells. In terms of processing, sumoylated. Sumoylation reduces affinity for mRNA. Ubiquitinated and degraded after nucleo-cytoplasmic transport by YWHAE.

The protein resides in the nucleus. Binds pre-mRNA and nucleates the assembly of 40S hnRNP particles. Interacts with poly-U tracts in the 3'-UTR or 5'-UTR of mRNA and modulates the stability and the level of translation of bound mRNA molecules. Single HNRNPC tetramers bind 230-240 nucleotides. Trimers of HNRNPC tetramers bind 700 nucleotides. May play a role in the early steps of spliceosome assembly and pre-mRNA splicing. N6-methyladenosine (m6A) has been shown to alter the local structure in mRNAs and long non-coding RNAs (lncRNAs) via a mechanism named 'm(6)A-switch', facilitating binding of HNRNPC, leading to regulation of mRNA splicing. This Mus musculus (Mouse) protein is Heterogeneous nuclear ribonucleoproteins C1/C2 (Hnrnpc).